The chain runs to 207 residues: Ras-related protein Rab-8B (207 aa).

GTP is bound by residues Ser-17, Gly-18, Val-19, Gly-20, Lys-21, Thr-22, Cys-23, Thr-35, Ser-39, and Thr-40. Mg(2+) is bound at residue Thr-22. 2 short sequence motifs (switch) span residues 31 to 45 (DAFNTTFISTIGIDF) and 63 to 80 (DTAGQERFRTITTAYYRG). The Mg(2+) site is built by Thr-40 and Asp-63. Residue Gly-66 participates in GTP binding. A Phosphothreonine; by LRRK2 modification is found at Thr-72. Asn-121, Lys-122, Asp-124, Ala-152, and Lys-153 together coordinate GTP. 2 positions are modified to phosphoserine: Ser-180 and Ser-183. At Cys-204 the chain carries Cysteine methyl ester. Cys-204 carries S-geranylgeranyl cysteine lipidation. The propeptide at 205–207 (SLL) is removed in mature form.

Belongs to the small GTPase superfamily. Rab family. Associated with actin, delta-catenin and alpha and beta tubulins. Interacts with OTOF. Interacts with PEX5R. Interacts with RAB3IP. Interacts with VIM. Interacts with CDH1. Interacts with MICALL2. Interacts with GDI1, GDI2, CHML and CHM; phosphorylation at Thr-72 disrupts these interactions. Interacts with MICAL1. The cofactor is Mg(2+). Phosphorylation of Thr-72 in the switch II region by LRRK2 prevents the association of RAB regulatory proteins, including CHM, CHML and RAB GDP dissociation inhibitors GDI1 and GDI2.

Its subcellular location is the cell membrane. It localises to the cytoplasmic vesicle. It is found in the phagosome membrane. The protein localises to the endosome membrane. The catalysed reaction is GTP + H2O = GDP + phosphate + H(+). Regulated by guanine nucleotide exchange factors (GEFs) including RAB3IP/RABIN8 which promotes the exchange of bound GDP for free GTP. Regulated by GTPase activating proteins (GAPs) which increase the GTP hydrolysis activity. Inhibited by GDP dissociation inhibitors (GDIs). In terms of biological role, the small GTPases Rab are key regulators of intracellular membrane trafficking, from the formation of transport vesicles to their fusion with membranes. Rabs cycle between an inactive GDP-bound form and an active GTP-bound form that is able to recruit to membranes different sets of downstream effectors directly responsible for vesicle formation, movement, tethering and fusion. RAB8B may be involved in polarized vesicular trafficking and neurotransmitter release. May participate in cell junction dynamics in Sertoli cells. May also participate in the export of a subset of neosynthesized proteins through a Rab8-Rab10-Rab11-dependent endososomal export route. This is Ras-related protein Rab-8B from Mus musculus (Mouse).